An 86-amino-acid polypeptide reads, in one-letter code: Small ribosomal subunit protein bS18 (86 aa).

It belongs to the bacterial ribosomal protein bS18 family. Part of the 30S ribosomal subunit. Forms a tight heterodimer with protein bS6.

Binds as a heterodimer with protein bS6 to the central domain of the 16S rRNA, where it helps stabilize the platform of the 30S subunit. This is Small ribosomal subunit protein bS18 from Maridesulfovibrio salexigens (strain ATCC 14822 / DSM 2638 / NCIMB 8403 / VKM B-1763) (Desulfovibrio salexigens).